A 239-amino-acid chain; its full sequence is Small ribosomal subunit protein uS3 (239 aa).

The KH type-2 domain occupies 40–108 (RGLLEKELYS…VALNVQEVQN (69 aa)). The disordered stretch occupies residues 212–239 (KPKARPELPKAEERPRRRRPAVRVKKEE). The span at 215–226 (ARPELPKAEERP) shows a compositional bias: basic and acidic residues. Residues 227 to 239 (RRRRPAVRVKKEE) are compositionally biased toward basic residues.

The protein belongs to the universal ribosomal protein uS3 family. Part of the 30S ribosomal subunit. Forms a tight complex with proteins S10 and S14.

Its function is as follows. Binds the lower part of the 30S subunit head. Binds mRNA in the 70S ribosome, positioning it for translation. This is Small ribosomal subunit protein uS3 (rpsC) from Thermus thermophilus (strain ATCC BAA-163 / DSM 7039 / HB27).